We begin with the raw amino-acid sequence, 396 residues long: Dimethyladenosine transferase 2, mitochondrial (396 aa).

The N-terminal 43 residues, 1 to 43 (MRGPAMRLPPRIALSALARGPSCILGSGAATRKDWQTRNRRGF), are a transit peptide targeting the mitochondrion. Residues 43–71 (FSDFNIEPLPDSDLEESSPWTSRNRSEPT) are disordered. Residues Ile74, Glu123, and Asp149 each coordinate S-adenosyl-L-methionine. The segment at 328 to 329 (KR) is DNA-binding.

This sequence belongs to the class I-like SAM-binding methyltransferase superfamily. rRNA adenine N(6)-methyltransferase family. KsgA subfamily. In terms of assembly, homodimer. Component of the mitochondrial transcription initiation complex, composed at least of TFB2M, TFAM and POLRMT. In this complex TFAM recruits POLRMT to the promoter whereas TFB2M induces structural changes in POLRMT to enable promoter opening and trapping of the DNA non-template strand. Interacts with mitochondrial RNA polymerase POLRMT. Interacts with TFAM. As to expression, ubiquitously expressed.

The protein resides in the mitochondrion. The enzyme catalyses adenosine in rRNA + S-adenosyl-L-methionine = N(6)-methyladenosine in rRNA + S-adenosyl-L-homocysteine + H(+). Its function is as follows. S-adenosyl-L-methionine-dependent rRNA methyltransferase which may methylate two specific adjacent adenosines in the loop of a conserved hairpin near the 3'-end of 12S mitochondrial rRNA. Component of the mitochondrial transcription initiation complex, composed at least of TFB2M, TFAM and POLRMT that is required for basal transcription of mitochondrial DNA. In this complex, TFAM recruits POLRMT to a specific promoter whereas TFB2M induces structural changes in POLRMT to enable promoter opening and trapping of the DNA non-template strand. Stimulates transcription independently of the methyltransferase activity. In Mus musculus (Mouse), this protein is Dimethyladenosine transferase 2, mitochondrial.